A 181-amino-acid chain; its full sequence is Sporozoite-associated mosquito saliva protein 1 (181 aa).

The first 24 residues, 1 to 24, serve as a signal peptide directing secretion; it reads MNSSWRVVVFLGLVILCHSRRARA.

In terms of tissue distribution, salivary gland (at protein level). As to expression, (Microbial infection) Detected with Plasmodium berghei sporozoites isolated from the saliva of infected Anopheles gambiae mosquitoes (at protein level).

Its subcellular location is the secreted. In terms of biological role, decreases host neutrophil chemotaxis induced by N-formylmethionine-leucyl-phenylalanine (fMLP). Functionally, (Microbial infection) Interacts with the surface of Plasmodium berghei sporozoites. Enhances sporozoite gliding activity. Enhances host hepatocyte traversal by sporozoites. In Anopheles gambiae (African malaria mosquito), this protein is Sporozoite-associated mosquito saliva protein 1.